A 218-amino-acid polypeptide reads, in one-letter code: Protein-L-isoaspartate O-methyltransferase (218 aa).

Ser-52 is a catalytic residue.

This sequence belongs to the methyltransferase superfamily. L-isoaspartyl/D-aspartyl protein methyltransferase family.

It localises to the cytoplasm. It catalyses the reaction [protein]-L-isoaspartate + S-adenosyl-L-methionine = [protein]-L-isoaspartate alpha-methyl ester + S-adenosyl-L-homocysteine. In terms of biological role, catalyzes the methyl esterification of L-isoaspartyl residues in peptides and proteins that result from spontaneous decomposition of normal L-aspartyl and L-asparaginyl residues. It plays a role in the repair and/or degradation of damaged proteins. The polypeptide is Protein-L-isoaspartate O-methyltransferase (Rhodopseudomonas palustris (strain ATCC BAA-98 / CGA009)).